A 235-amino-acid polypeptide reads, in one-letter code: Large ribosomal subunit protein uL1 (235 aa).

Belongs to the universal ribosomal protein uL1 family. As to quaternary structure, part of the 50S ribosomal subunit.

Its function is as follows. Binds directly to 23S rRNA. The L1 stalk is quite mobile in the ribosome, and is involved in E site tRNA release. Functionally, protein L1 is also a translational repressor protein, it controls the translation of the L11 operon by binding to its mRNA. In Micrococcus luteus (strain ATCC 4698 / DSM 20030 / JCM 1464 / CCM 169 / CCUG 5858 / IAM 1056 / NBRC 3333 / NCIMB 9278 / NCTC 2665 / VKM Ac-2230) (Micrococcus lysodeikticus), this protein is Large ribosomal subunit protein uL1.